A 201-amino-acid polypeptide reads, in one-letter code: Large ribosomal subunit protein uL4 (201 aa).

The tract at residues 43 to 73 (SRGQKTRAEVTGSGKKPWRQKGTGRARSGSV) is disordered.

It belongs to the universal ribosomal protein uL4 family. As to quaternary structure, part of the 50S ribosomal subunit.

Its function is as follows. One of the primary rRNA binding proteins, this protein initially binds near the 5'-end of the 23S rRNA. It is important during the early stages of 50S assembly. It makes multiple contacts with different domains of the 23S rRNA in the assembled 50S subunit and ribosome. Forms part of the polypeptide exit tunnel. In Sodalis glossinidius (strain morsitans), this protein is Large ribosomal subunit protein uL4.